The following is a 327-amino-acid chain: MSFLGGFFGPICEIDVALSDGETRKMAEMKTEDGKVEKHYLFYDGESVSGKVNLAFKQPGKRLEHQGIRIEFVGQIELFNDKSNTHEFVNLVKELALPGELTQSRSYDFEFMQVEKPYESYIGANVRLRYFLKVTIVRRLTDLVKEYDLIVHQLATYPEVNNSIKMEVGIEDCLHIEFEYNKSKYHLKDVIVGKIYFLLVRIKIQHMELQLIKKEITGIGPSTTTETETIAKYEIMDGAPVKGESIPIRLFLAGYDPTPTMRDVNKKFSVRYFLNLVLVDEEDRRYFKQQEIILWRKAPEKLRKQRTNFHQRFESPESQASAEQPEM.

Positions R306–M327 are disordered. A Phosphoserine modification is found at S315. Residues P316–M327 show a composition bias toward polar residues.

The protein belongs to the VPS26 family. In terms of assembly, component of the heterotrimeric retromer cargo-selective complex (CSC), also described as vacuolar protein sorting subcomplex (VPS), formed by VPS26 (VPS26A or VPS26B), VPS29 and VPS35. The CSC has a highly elongated structure with VPS26 and VPS29 binding independently at opposite distal ends of VPS35 as central platform. The CSC is believed to associate with variable sorting nexins to form functionally distinct retromer complex variants. The originally described retromer complex (also called SNX-BAR retromer) is a pentamer containing the CSC and a heterodimeric membrane-deforming subcomplex formed between SNX1 or SNX2 and SNX5 or SNX6 (also called SNX-BAR subcomplex); the respective CSC and SNX-BAR subcomplexes associate with low affinity. The CSC associates with SNX3 to form a SNX3-retromer complex. The CSC associates with SNX27, the WASH complex and the SNX-BAR subcomplex to form the SNX27-retromer complex. Interacts with VPS29, VPS35, SNX27, SNX1, SNX2, SNX5, SNX6, SNX3, RAB7A, ECPAS, EHD1, WASHC5, SORL1.

The protein localises to the cytoplasm. The protein resides in the endosome membrane. Its subcellular location is the early endosome. In terms of biological role, acts as a component of the retromer cargo-selective complex (CSC). The CSC is believed to be the core functional component of retromer or respective retromer complex variants acting to prevent missorting of selected transmembrane cargo proteins into the lysosomal degradation pathway. The recruitment of the CSC to the endosomal membrane involves RAB7A and SNX3. The SNX-BAR retromer mediates retrograde transport of cargo proteins from endosomes to the trans-Golgi network (TGN) and is involved in endosome-to-plasma membrane transport for cargo protein recycling. The SNX3-retromer mediates the retrograde endosome-to-TGN transport of WLS distinct from the SNX-BAR retromer pathway. The SNX27-retromer is believed to be involved in endosome-to-plasma membrane trafficking and recycling of a broad spectrum of cargo proteins. The CSC complex seems to act as recruitment hub for other proteins, such as the WASH complex and TBC1D5. Required for retrograde transport of lysosomal enzyme receptor IGF2R. Required to regulate transcytosis of the polymeric immunoglobulin receptor (pIgR-pIgA). Required for the endosomal localization of WASHC2 (indicative for the WASH complex). Required for the endosomal localization of TBC1D5. Mediates retromer cargo recognition of SORL1 and is involved in trafficking of SORL1 implicated in sorting and processing of APP. Involved in retromer-independent lysosomal sorting of F2R. Involved in recycling of ADRB2. Acts redundantly with VSP26B in SNX-27 mediated endocytic recycling of SLC2A1/GLUT1. Enhances the affinity of SNX27 for PDZ-binding motifs in cargo proteins. The chain is Vacuolar protein sorting-associated protein 26A (Vps26a) from Rattus norvegicus (Rat).